The following is a 512-amino-acid chain: 2,3-bisphosphoglycerate-independent phosphoglycerate mutase (512 aa).

2 residues coordinate Mn(2+): aspartate 12 and serine 62. Residue serine 62 is the Phosphoserine intermediate of the active site. Substrate is bound by residues histidine 123, arginine 154–aspartate 155, arginine 181, arginine 187, arginine 253–arginine 256, and lysine 336. Mn(2+) is bound by residues aspartate 403, histidine 407, aspartate 444, histidine 445, and histidine 462.

The protein belongs to the BPG-independent phosphoglycerate mutase family. Monomer. Requires Mn(2+) as cofactor.

The enzyme catalyses (2R)-2-phosphoglycerate = (2R)-3-phosphoglycerate. Its pathway is carbohydrate degradation; glycolysis; pyruvate from D-glyceraldehyde 3-phosphate: step 3/5. In terms of biological role, catalyzes the interconversion of 2-phosphoglycerate and 3-phosphoglycerate. This is 2,3-bisphosphoglycerate-independent phosphoglycerate mutase from Aster yellows witches'-broom phytoplasma (strain AYWB).